The chain runs to 270 residues: Aliphatic sulfonates import ATP-binding protein SsuB 3 (270 aa).

The ABC transporter domain maps to 17–238; the sequence is LAVRNLKKAF…VRGSHRLAAL (222 aa). 49-56 lines the ATP pocket; it reads GRSGCGKS.

Belongs to the ABC transporter superfamily. Aliphatic sulfonates importer (TC 3.A.1.17.2) family. The complex is composed of two ATP-binding proteins (SsuB), two transmembrane proteins (SsuC) and a solute-binding protein (SsuA).

It localises to the cell inner membrane. The catalysed reaction is ATP + H2O + aliphatic sulfonate-[sulfonate-binding protein]Side 1 = ADP + phosphate + aliphatic sulfonateSide 2 + [sulfonate-binding protein]Side 1.. In terms of biological role, part of the ABC transporter complex SsuABC involved in aliphatic sulfonates import. Responsible for energy coupling to the transport system. This is Aliphatic sulfonates import ATP-binding protein SsuB 3 from Pseudomonas savastanoi pv. phaseolicola (strain 1448A / Race 6) (Pseudomonas syringae pv. phaseolicola (strain 1448A / Race 6)).